The chain runs to 299 residues: tRNA(Met) cytidine acetate ligase (299 aa).

ATP contacts are provided by residues 6–19 (IAEYNPFHNGHIYM), G100, N157, and R182.

The protein belongs to the TmcAL family.

The protein localises to the cytoplasm. It carries out the reaction cytidine(34) in elongator tRNA(Met) + acetate + ATP = N(4)-acetylcytidine(34) in elongator tRNA(Met) + AMP + diphosphate. Functionally, catalyzes the formation of N(4)-acetylcytidine (ac(4)C) at the wobble position of elongator tRNA(Met), using acetate and ATP as substrates. First activates an acetate ion to form acetyladenylate (Ac-AMP) and then transfers the acetyl group to tRNA to form ac(4)C34. The sequence is that of tRNA(Met) cytidine acetate ligase from Mycoplasma mobile (strain ATCC 43663 / 163K / NCTC 11711) (Mesomycoplasma mobile).